Reading from the N-terminus, the 90-residue chain is Cytochrome c7 (90 aa).

The N-terminal stretch at 1-20 is a signal peptide; that stretch reads MKRIIASLALSVFCAGLAFA. Heme is bound by residues histidine 37, histidine 40, cysteine 47, cysteine 50, histidine 51, histidine 67, cysteine 70, cysteine 73, histidine 74, cysteine 84, cysteine 87, and histidine 88.

In terms of processing, binds 3 heme groups per subunit.

Functionally, may be involved in anaerobic iron respiration. The chain is Cytochrome c7 from Geobacter metallireducens (strain ATCC 53774 / DSM 7210 / GS-15).